Reading from the N-terminus, the 206-residue chain is MINIALPKGRLVNKVYTLFEKIGYENKELLEDNRKLVFENKDKNVRYLIVKPSDVGIYVEKGVADIGIVGKDILLENNHDVYELLDLKFGKCRVCMASVNGYKEDIERRLRVATKYVNISKNYFNSINRDVEIIKLNGSIELAPILNLSDVIVDIVETGSTLRENNLTVIKEIIDYISARLIVNKVSYKFKNDLIKTIIKNIEEVL.

The protein belongs to the ATP phosphoribosyltransferase family. Short subfamily. As to quaternary structure, heteromultimer composed of HisG and HisZ subunits.

It localises to the cytoplasm. The catalysed reaction is 1-(5-phospho-beta-D-ribosyl)-ATP + diphosphate = 5-phospho-alpha-D-ribose 1-diphosphate + ATP. It participates in amino-acid biosynthesis; L-histidine biosynthesis; L-histidine from 5-phospho-alpha-D-ribose 1-diphosphate: step 1/9. Its function is as follows. Catalyzes the condensation of ATP and 5-phosphoribose 1-diphosphate to form N'-(5'-phosphoribosyl)-ATP (PR-ATP). Has a crucial role in the pathway because the rate of histidine biosynthesis seems to be controlled primarily by regulation of HisG enzymatic activity. In Brachyspira hyodysenteriae (strain ATCC 49526 / WA1), this protein is ATP phosphoribosyltransferase.